The following is a 130-amino-acid chain: Small ribosomal subunit protein uS8 (130 aa).

This sequence belongs to the universal ribosomal protein uS8 family. Part of the 30S ribosomal subunit.

Functionally, one of the primary rRNA binding proteins, it binds directly to 16S rRNA central domain where it helps coordinate assembly of the platform of the 30S subunit. The sequence is that of Small ribosomal subunit protein uS8 from Haloarcula marismortui (strain ATCC 43049 / DSM 3752 / JCM 8966 / VKM B-1809) (Halobacterium marismortui).